The following is a 489-amino-acid chain: 2-(3-amino-3-carboxypropyl)histidine synthase subunit 2 (489 aa).

Position 1 is an N-acetylmethionine (Met-1). Ser-7 is modified (phosphoserine). [4Fe-4S] cluster-binding residues include Cys-89, Cys-110, and Cys-341. Residues 398–489 (PPPESELWDT…AIAYEDEGSG (92 aa)) form a required for function region. Thr-435 carries the phosphothreonine modification. A phosphoserine mark is found at Ser-446 and Ser-456. At Thr-467 the chain carries Phosphothreonine. Position 488 is a phosphoserine (Ser-488).

This sequence belongs to the DPH1/DPH2 family. DPH2 subfamily. In terms of assembly, component of the 2-(3-amino-3-carboxypropyl)histidine synthase complex composed of DPH1, DPH2, DPH3 and a NADH-dependent reductase. Interacts with DPH1. Requires [4Fe-4S] cluster as cofactor.

It participates in protein modification; peptidyl-diphthamide biosynthesis. Functionally, required for the first step of diphthamide biosynthesis, a post-translational modification of histidine which occurs in elongation factor 2. DPH1 and DPH2 transfer a 3-amino-3-carboxypropyl (ACP) group from S-adenosyl-L-methionine (SAM) to a histidine residue, the reaction is assisted by a reduction system comprising DPH3 and a NADH-dependent reductase. Facilitates the reduction of the catalytic iron-sulfur cluster found in the DPH1 subunit. The chain is 2-(3-amino-3-carboxypropyl)histidine synthase subunit 2 (DPH2) from Cricetulus griseus (Chinese hamster).